The sequence spans 111 residues: X antigen family member 2 (111 aa).

Disordered regions lie at residues 1 to 61 (MSWR…AAEI) and 77 to 111 (KTGD…KSQV). The segment covering 86–111 (TDVKGKILPKAEHFKMPEAGEGKSQV) has biased composition (basic and acidic residues).

This sequence belongs to the GAGE family.

The chain is X antigen family member 2 (XAGE2) from Homo sapiens (Human).